Here is a 41-residue protein sequence, read N- to C-terminus: Plantazolicin (41 aa).

A propeptide spanning residues 1-27 (MTQIKVPTALIASVHGEGQHLFEPMAA) is cleaved from the precursor. Arg28 carries the N2,N2-dimethylarginine modification. Positions 28–29 (RC) form a cross-link, thiazole-4-carboxylic acid (Arg-Cys). Cross-links (5-methyloxazole-4-carboxylic acid (Cys-Thr)) lie at residues 29-30 (CT) and 31-32 (CT). The thiazole-4-carboxylic acid (Thr-Cys) cross-link spans 30 to 31 (TC). Residues 32–33 (TT) constitute a cross-link (5-methyloxazole-4-carboxylic acid (Thr-Thr)). A cross-link (oxazole-4-carboxylic acid (Ile-Ser)) is located at residues 35–36 (IS). Cross-links (oxazole-4-carboxylic acid (Ser-Ser)) lie at residues 36–37 (SS), 37–38 (SS), and 38–39 (SS). The segment at residues 39 to 40 (ST) is a cross-link (5-methyloxazoline-4-carboxylic acid (Ser-Thr)).

Post-translationally, maturation of thiazole and oxazole containing antibiotics involves the enzymatic condensation of a Cys, Ser or Thr with the alpha-carbonyl of the preceding amino acid to form a thioether or ether bond, then dehydration to form a double bond with the alpha-amino nitrogen. Thiazoline or oxazoline ring are dehydrogenated to form thiazole or oxazole rings. In terms of processing, 2 forms exist: plantazolicin A and plantazolicin B. The structural difference between them is a dimethylation at Arg-28 in plantazolicin A.

Its subcellular location is the secreted. It is found in the cell wall. Its function is as follows. Peptide antibiotic inhibiting growth of Gram-positive bacteria in the dimethylated form plantazolicin A. The desmethyl form plantazolicin B has no antibiotic activity. The mode of action appears to be disruption of cell walls and lysis of cells. Inhibits B.subtilis strain HB0042, B.megaterium strain 7A1 and B.anthracis (MIC=2-4 ug/ml). Weakly inhibits Gram-positive bacteria B.brevis strain ATCC 8246, B.subtilis strain 168, B.cereus strain ATCC 14579 and strain CU1065, B.licheniformis strain ATCC 9789, M.luteus, B.sphaericus, P.granivorans and S.pyogenes (MIC=128 ug/ml). Does not inhibit B.pumilus, P.polymyxa, Arthrobacter sp., S.aureus, vancomycin-resistant E.faecalis, L.monocytogenes, methicillin-resistant S.aureus or Gram-negative bacteria E.coli strain K12, K.terrigena, Pseudomonas sp. and E.carotovora. In Bacillus velezensis (strain DSM 23117 / BGSC 10A6 / LMG 26770 / FZB42) (Bacillus amyloliquefaciens subsp. plantarum), this protein is Plantazolicin.